The sequence spans 134 residues: Large ribosomal subunit protein bL20 (134 aa).

Belongs to the bacterial ribosomal protein bL20 family.

Binds directly to 23S ribosomal RNA and is necessary for the in vitro assembly process of the 50S ribosomal subunit. It is not involved in the protein synthesizing functions of that subunit. In Sinorhizobium medicae (strain WSM419) (Ensifer medicae), this protein is Large ribosomal subunit protein bL20.